The following is a 296-amino-acid chain: Tyrosine recombinase XerC (296 aa).

One can recognise a Core-binding (CB) domain in the interval Met-1–Met-84. One can recognise a Tyr recombinase domain in the interval Tyr-105–Leu-286. Active-site residues include Arg-145, Lys-169, His-238, Arg-241, and His-264. Tyr-273 serves as the catalytic O-(3'-phospho-DNA)-tyrosine intermediate.

This sequence belongs to the 'phage' integrase family. XerC subfamily. In terms of assembly, forms a cyclic heterotetrameric complex composed of two molecules of XerC and two molecules of XerD.

Its subcellular location is the cytoplasm. Functionally, site-specific tyrosine recombinase, which acts by catalyzing the cutting and rejoining of the recombining DNA molecules. The XerC-XerD complex is essential to convert dimers of the bacterial chromosome into monomers to permit their segregation at cell division. It also contributes to the segregational stability of plasmids. The chain is Tyrosine recombinase XerC from Staphylococcus epidermidis (strain ATCC 35984 / DSM 28319 / BCRC 17069 / CCUG 31568 / BM 3577 / RP62A).